Consider the following 301-residue polypeptide: Rhodopsin (301 aa).

At 1–18 (LHMIHLHWYQYPPMNPMM) the chain is on the extracellular side. A helical transmembrane segment spans residues 19–43 (YPLLLIFMLFTGILCLAGNFVTIWV). Residues 44–55 (FMNTKSLRTPAN) lie on the Cytoplasmic side of the membrane. The helical transmembrane segment at 56–78 (LLVVNLAMSDFLMMFTMFPPMMV) threads the bilayer. The Extracellular segment spans residues 79–92 (TCYYHTWTLGPTFC). The cysteines at positions 92 and 169 are disulfide-linked. Residues 93–115 (QVYAFLGNLCGCASIWTMVFITF) form a helical membrane-spanning segment. Residues 116-118 (DRY) carry the 'Ionic lock' involved in activated form stabilization motif. Topologically, residues 116–134 (DRYNVIVKGVAGEPLSNKK) are cytoplasmic. A helical membrane pass occupies residues 135–155 (AAMWILSVWVLSTAWCMAPFF). Over 156–182 (GWNSYVPEGNLTGCGTDYLSEDILSRS) the chain is Extracellular. An N-linked (GlcNAc...) asparagine glycan is attached at asparagine 165. The helical transmembrane segment at 183–204 (YLYIYSTWVYFLPLTITIYCYV) threads the bilayer. At 205 to 245 (FIIKAVAAHEKGMRDQAKKMGIKSLRNEEAQKTSAECRLAK) the chain is on the cytoplasmic side. Residues 246–267 (IAMTTVALWFIAWTPYLLINWV) traverse the membrane as a helical segment. Residues 268 to 278 (GMFARSYLSPV) lie on the Extracellular side of the membrane. Residues 279-300 (YTIWGYVFAKANAVYNPIVYAI) traverse the membrane as a helical segment. Lysine 288 bears the N6-(retinylidene)lysine mark.

Belongs to the G-protein coupled receptor 1 family. Opsin subfamily. In terms of assembly, homodimer. Interacts with GNAQ. Contains one covalently linked retinal chromophore.

The protein resides in the cell projection. Its subcellular location is the rhabdomere membrane. Photoreceptor required for image-forming vision at low light intensity. Can use both retinal and 3-dehydroretinal as visual pigment. Light-induced isomerization of 11-cis to all-trans retinal triggers a conformational change that activates signaling via G-proteins. Signaling via GNAQ probably mediates the activation of phospholipase C. The sequence is that of Rhodopsin (RHO) from Faxonius virilis (Virile crayfish).